Here is a 464-residue protein sequence, read N- to C-terminus: tRNA(Ile)-lysidine synthase (464 aa).

Residue 30–35 (SGGVDS) coordinates ATP.

Belongs to the tRNA(Ile)-lysidine synthase family.

Its subcellular location is the cytoplasm. It carries out the reaction cytidine(34) in tRNA(Ile2) + L-lysine + ATP = lysidine(34) in tRNA(Ile2) + AMP + diphosphate + H(+). Ligates lysine onto the cytidine present at position 34 of the AUA codon-specific tRNA(Ile) that contains the anticodon CAU, in an ATP-dependent manner. Cytidine is converted to lysidine, thus changing the amino acid specificity of the tRNA from methionine to isoleucine. The sequence is that of tRNA(Ile)-lysidine synthase from Shewanella oneidensis (strain ATCC 700550 / JCM 31522 / CIP 106686 / LMG 19005 / NCIMB 14063 / MR-1).